A 162-amino-acid chain; its full sequence is uncharacterized protein (162 aa).

An N-terminal signal peptide occupies residues 1 to 23 (MLSLKSPAVLLSMVILVPLFALA).

This is an uncharacterized protein from Mycosarcoma maydis (Corn smut fungus).